A 493-amino-acid chain; its full sequence is Extracellular tyrosine-protein kinase PKDCC (493 aa).

Positions 1-32 (MRRRRAAVAAGFCASFLLGSVLNVLFAPGSEP) are cleaved as a signal peptide. The interval 28-128 (PGSEPPRPGQ…PGPGSPGPGP (101 aa)) is disordered. The segment covering 30–46 (SEPPRPGQSPEPSPAPG) has biased composition (pro residues). Basic and acidic residues predominate over residues 52-69 (GRGELARQIRARYEEVQR). Pro residues-rich tracts occupy residues 95-105 (PGLPRPRPPWA) and 114-127 (GWPP…PGPG). An N-linked (GlcNAc...) asparagine glycan is attached at Asn137. One can recognise a Protein kinase domain in the interval 138 to 493 (VSGAQYMGSG…NKTTYVKASG (356 aa)). ATP contacts are provided by residues 144-152 (MGSGYTKAV) and Lys166. Tyr148 is modified (phosphotyrosine). Ser177 carries the post-translational modification Phosphoserine. The Proton acceptor role is filled by Asp278. 5 N-linked (GlcNAc...) asparagine glycosylation sites follow: Asn320, Asn369, Asn400, Asn460, and Asn484.

This sequence belongs to the protein kinase superfamily. N-glycosylated. In terms of processing, phosphorylated on tyrosines; probably via autophosphorylation. Highly expressed in platelets.

The protein resides in the secreted. It localises to the golgi apparatus. It carries out the reaction L-tyrosyl-[protein] + ATP = O-phospho-L-tyrosyl-[protein] + ADP + H(+). Its function is as follows. Secreted tyrosine-protein kinase that mediates phosphorylation of extracellular proteins and endogenous proteins in the secretory pathway, which is essential for patterning at organogenesis stages. Mediates phosphorylation of MMP1, MMP13, MMP14, MMP19 and ERP29. Probably plays a role in platelets: rapidly and quantitatively secreted from platelets in response to stimulation of platelet degranulation. May also have serine/threonine protein kinase activity. Required for longitudinal bone growth through regulation of chondrocyte differentiation. May be indirectly involved in protein transport from the Golgi apparatus to the plasma membrane. The protein is Extracellular tyrosine-protein kinase PKDCC of Homo sapiens (Human).